Consider the following 420-residue polypeptide: Acetyl-CoA acetyltransferase A, mitochondrial (420 aa).

Residues 1–33 (MAFCGTRTAARLSHSTRALHNTHRNFASQRTLN) constitute a mitochondrion transit peptide. The active-site Acyl-thioester intermediate is the Cys-119. Residues Tyr-212, 251–253 (RVD), and Lys-256 contribute to the CoA site. Tyr-212 is a binding site for K(+). 2 residues coordinate K(+): Ala-273 and Ala-274. Residue Ser-277 coordinates CoA. Residue Val-374 participates in K(+) binding. Cys-406 (proton donor/acceptor) is an active-site residue.

This sequence belongs to the thiolase-like superfamily. Thiolase family. In terms of assembly, homotetramer.

The protein localises to the mitochondrion. It carries out the reaction 2 acetyl-CoA = acetoacetyl-CoA + CoA. The catalysed reaction is propanoyl-CoA + acetyl-CoA = 2-methyl-3-oxobutanoyl-CoA + CoA. The protein operates within lipid metabolism; fatty acid beta-oxidation. This is one of the enzymes that catalyzes the last step of the mitochondrial beta-oxidation pathway, an aerobic process breaking down fatty acids into acetyl-CoA. Using free coenzyme A/CoA, catalyzes the thiolytic cleavage of medium- to long-chain 3-oxoacyl-CoAs into acetyl-CoA and a fatty acyl-CoA shortened by two carbon atoms. The activity of the enzyme is reversible and it can also catalyze the condensation of two acetyl-CoA molecules into acetoacetyl-CoA. Thereby, it plays a major role in ketone body metabolism. The polypeptide is Acetyl-CoA acetyltransferase A, mitochondrial (acat1-a) (Xenopus laevis (African clawed frog)).